Consider the following 429-residue polypeptide: Light-independent protochlorophyllide reductase subunit N (429 aa).

Residues C32, C57, and C118 each coordinate [4Fe-4S] cluster.

Belongs to the BchN/ChlN family. In terms of assembly, protochlorophyllide reductase is composed of three subunits; BchL, BchN and BchB. Forms a heterotetramer of two BchB and two BchN subunits. [4Fe-4S] cluster serves as cofactor.

It carries out the reaction chlorophyllide a + oxidized 2[4Fe-4S]-[ferredoxin] + 2 ADP + 2 phosphate = protochlorophyllide a + reduced 2[4Fe-4S]-[ferredoxin] + 2 ATP + 2 H2O. Its pathway is porphyrin-containing compound metabolism; bacteriochlorophyll biosynthesis (light-independent). Component of the dark-operative protochlorophyllide reductase (DPOR) that uses Mg-ATP and reduced ferredoxin to reduce ring D of protochlorophyllide (Pchlide) to form chlorophyllide a (Chlide). This reaction is light-independent. The NB-protein (BchN-BchB) is the catalytic component of the complex. This chain is Light-independent protochlorophyllide reductase subunit N, found in Rhodopseudomonas palustris (strain TIE-1).